We begin with the raw amino-acid sequence, 317 residues long: uncharacterized protein (317 aa).

Transmembrane regions (helical) follow at residues 18 to 38, 58 to 78, 92 to 112, 130 to 150, 159 to 179, 202 to 222, and 252 to 272; these read FWLI…LVII, IILS…GFIF, FLGS…WWSF, LFSA…AWAV, LFHI…KLLP, CSFL…LSTV, and NLLN…LLIA.

Belongs to the CbiQ family.

It is found in the cell membrane. This is an uncharacterized protein from Mycoplasma genitalium (strain ATCC 33530 / DSM 19775 / NCTC 10195 / G37) (Mycoplasmoides genitalium).